The chain runs to 193 residues: Anthranilate synthase component 2 (193 aa).

The 191-residue stretch at 3–193 (DILLLDNVDS…EQTLAWALAK (191 aa)) folds into the Glutamine amidotransferase type-1 domain. Position 57-59 (57-59 (GPG)) interacts with L-glutamine. Cys-84 (nucleophile; for GATase activity) is an active-site residue. Residues Gln-88 and 134–135 (SL) contribute to the L-glutamine site. Active-site for GATase activity residues include His-170 and Glu-172.

As to quaternary structure, heterotetramer consisting of two non-identical subunits: a beta subunit (TrpG) and a large alpha subunit (TrpE).

The catalysed reaction is chorismate + L-glutamine = anthranilate + pyruvate + L-glutamate + H(+). The protein operates within amino-acid biosynthesis; L-tryptophan biosynthesis; L-tryptophan from chorismate: step 1/5. In terms of biological role, part of a heterotetrameric complex that catalyzes the two-step biosynthesis of anthranilate, an intermediate in the biosynthesis of L-tryptophan. In the first step, the glutamine-binding beta subunit (TrpG) of anthranilate synthase (AS) provides the glutamine amidotransferase activity which generates ammonia as a substrate that, along with chorismate, is used in the second step, catalyzed by the large alpha subunit of AS (TrpE) to produce anthranilate. In the absence of TrpG, TrpE can synthesize anthranilate directly from chorismate and high concentrations of ammonia. The sequence is that of Anthranilate synthase component 2 (trpG) from Serratia marcescens.